A 457-amino-acid polypeptide reads, in one-letter code: Tubulin beta chain (457 aa).

Positions 11, 69, 138, 142, 143, 144, 204, and 226 each coordinate GTP. Glu69 provides a ligand contact to Mg(2+). Phosphoserine is present on residues Ser278 and Ser280. The tract at residues 423–457 (QQYQEATVEDDEEVDENGDFGAPQNQDEPITENFE) is disordered. The span at 429 to 440 (TVEDDEEVDENG) shows a compositional bias: acidic residues.

The protein belongs to the tubulin family. Dimer of alpha and beta chains. A typical microtubule is a hollow water-filled tube with an outer diameter of 25 nm and an inner diameter of 15 nM. Alpha-beta heterodimers associate head-to-tail to form protofilaments running lengthwise along the microtubule wall with the beta-tubulin subunit facing the microtubule plus end conferring a structural polarity. Microtubules usually have 13 protofilaments but different protofilament numbers can be found in some organisms and specialized cells. Mg(2+) serves as cofactor.

Its subcellular location is the cytoplasm. The protein localises to the cytoskeleton. In terms of biological role, tubulin is the major constituent of microtubules, a cylinder consisting of laterally associated linear protofilaments composed of alpha- and beta-tubulin heterodimers. Microtubules grow by the addition of GTP-tubulin dimers to the microtubule end, where a stabilizing cap forms. Below the cap, tubulin dimers are in GDP-bound state, owing to GTPase activity of alpha-tubulin. In Saccharomyces cerevisiae (strain ATCC 204508 / S288c) (Baker's yeast), this protein is Tubulin beta chain (TUB2).